The following is a 494-amino-acid chain: MSLYEYKHPIINKDLAAPDPVSAQKRSFPTLEAWYDVINDYEFQSRCPIILKNSHKNKHFTFACHLKSCPFKILLSYQGANNSGSSEDGSPHGLSGDGGSSSSGSNHHNGHTNLAEDGRAEDEDDDEDDDAAVTAAIAAAVAAVADSQETIKGPFVVTKIEPYHNHPLESNLSLQRFVLSKIPKILQVDLKFDAILESLCNDDDNTVAKFRVAQYVEESGILDIIKQRYGLTEAEMDKKMLSNIARRVTTYKARFVLKRKKDGVYAMPTAHQLTGGDHHQVQHHHHPSIPAHHQHQLPEGQQRDVQHHHQQQQQQLQHQEQHQSHVDSGHNVYQNRIGSISDNDDSAIHNLDDTNVRVAAAAAAAAAALQSRENHDTEDLKRTLEQVQDDESLDVGVPDSKRQLHRRERDRVAEALKMATRDILSNQSVDSDVNVDVDLVTGHKQLSPHDDMAEQLRLLSSHLKEVEAEENVSDNNLKKDDIPDENIQPELRGQ.

Disordered stretches follow at residues 82-130 (NSGS…EDDD) and 273-328 (LTGG…HVDS). A compositionally biased stretch (acidic residues) spans 119-130 (RAEDEDDDEDDD). The segment covering 281–295 (VQHHHHPSIPAHHQH) has biased composition (basic residues). A compositionally biased stretch (basic and acidic residues) spans 319-328 (QEQHQSHVDS). Serine 400 carries the post-translational modification Phosphoserine; by PKC. The interval 467 to 494 (EAEENVSDNNLKKDDIPDENIQPELRGQ) is disordered.

It belongs to the ABF1 family. Extensively phosphorylated on Ser and Thr residues.

The protein resides in the nucleus. General regulatory factor (GRF) that contributes to transcriptional activation of a large number of genes, as well as to DNA replication, silencing and telomere structure. Involved in the transcription activation of a subset of ribosomal protein genes. Binds the ARS-elements found in many promoters. Binds to the sequence 5'-TCN(7)ACG-3'. This chain is ARS-binding factor 1 (ABF1), found in Kluyveromyces lactis (strain ATCC 8585 / CBS 2359 / DSM 70799 / NBRC 1267 / NRRL Y-1140 / WM37) (Yeast).